The chain runs to 379 residues: Beta sliding clamp (379 aa).

It belongs to the beta sliding clamp family. In terms of assembly, forms a ring-shaped head-to-tail homodimer around DNA which binds and tethers DNA polymerases and other proteins to the DNA. The DNA replisome complex has a single clamp-loading complex (3 tau and 1 each of delta, delta', psi and chi subunits) which binds 3 Pol III cores (1 core on the leading strand and 2 on the lagging strand) each with a beta sliding clamp dimer. Additional proteins in the replisome are other copies of gamma, psi and chi, Ssb, DNA helicase and RNA primase.

The protein localises to the cytoplasm. Functionally, confers DNA tethering and processivity to DNA polymerases and other proteins. Acts as a clamp, forming a ring around DNA (a reaction catalyzed by the clamp-loading complex) which diffuses in an ATP-independent manner freely and bidirectionally along dsDNA. Initially characterized for its ability to contact the catalytic subunit of DNA polymerase III (Pol III), a complex, multichain enzyme responsible for most of the replicative synthesis in bacteria; Pol III exhibits 3'-5' exonuclease proofreading activity. The beta chain is required for initiation of replication as well as for processivity of DNA replication. The sequence is that of Beta sliding clamp (dnaN) from Rickettsia bellii (strain RML369-C).